Consider the following 365-residue polypeptide: Probable 7-methylxanthine methyltransferase PCS2 (365 aa).

Tyr19 provides a ligand contact to S-adenosyl-L-homocysteine. A theobromine-binding site is contributed by Thr26. Cys62, Asp99, Leu100, Ser134, and Phe135 together coordinate S-adenosyl-L-homocysteine. Residues Tyr152, His155, and Trp156 each contribute to the theobromine site. Asn173 is a Mg(2+) binding site. A theobromine-binding site is contributed by Arg221. Asp259, Phe261, and Asn262 together coordinate Mg(2+).

It belongs to the methyltransferase superfamily. Type-7 methyltransferase family. The cofactor is Mg(2+).

The catalysed reaction is 7-methylxanthine + S-adenosyl-L-methionine = theobromine + S-adenosyl-L-homocysteine + H(+). Its function is as follows. No detectable N-methyltransferase activity. This chain is Probable 7-methylxanthine methyltransferase PCS2, found in Camellia ptilophylla (Cocoa tea).